The chain runs to 821 residues: Phenylalanine--tRNA ligase beta subunit (821 aa).

The region spanning 39–149 (RTWAEGVVVG…DAVTVGEDVR (111 aa)) is the tRNA-binding domain. Positions 409–503 (PLERTLTLRL…RLYGYDRFEE (95 aa)) constitute a B5 domain. 4 residues coordinate Mg(2+): D481, D487, E490, and E491. Residues 724–820 (STYPASDRDL…LVEKYAVTLR (97 aa)) enclose the FDX-ACB domain.

Belongs to the phenylalanyl-tRNA synthetase beta subunit family. Type 1 subfamily. Tetramer of two alpha and two beta subunits. Mg(2+) is required as a cofactor.

The protein localises to the cytoplasm. The enzyme catalyses tRNA(Phe) + L-phenylalanine + ATP = L-phenylalanyl-tRNA(Phe) + AMP + diphosphate + H(+). This is Phenylalanine--tRNA ligase beta subunit from Thermosynechococcus vestitus (strain NIES-2133 / IAM M-273 / BP-1).